The primary structure comprises 346 residues: Protein RecA (346 aa).

67 to 74 (GPESSGKT) is an ATP binding site.

This sequence belongs to the RecA family.

The protein localises to the cytoplasm. Functionally, can catalyze the hydrolysis of ATP in the presence of single-stranded DNA, the ATP-dependent uptake of single-stranded DNA by duplex DNA, and the ATP-dependent hybridization of homologous single-stranded DNAs. It interacts with LexA causing its activation and leading to its autocatalytic cleavage. The sequence is that of Protein RecA from Frankia alni (strain DSM 45986 / CECT 9034 / ACN14a).